A 270-amino-acid polypeptide reads, in one-letter code: Phosphatidylinositol transfer protein alpha isoform (270 aa).

A 1,2-diacyl-sn-glycero-3-phospho-(1D-myo-inositol) is bound by residues T58, K60, E85, N89, T96, and K194. An N6-acetyllysine modification is found at K215.

It belongs to the PtdIns transfer protein family. PI transfer class I subfamily. Post-translationally, phosphorylated by PKC in a calcium and phosphatidylserine-dependent manner.

It localises to the cytoplasm. Its subcellular location is the nucleus. The enzyme catalyses a 1,2-diacyl-sn-glycero-3-phosphocholine(in) = a 1,2-diacyl-sn-glycero-3-phosphocholine(out). It carries out the reaction a 1,2-diacyl-sn-glycero-3-phospho-(1D-myo-inositol)(in) = a 1,2-diacyl-sn-glycero-3-phospho-(1D-myo-inositol)(out). Functionally, catalyzes the transfer of phosphatidylinositol (PI) and phosphatidylcholine (PC) between membranes. Shows a preference for PI and PC containing shorter saturated or monosaturated acyl chains at the sn-1 and sn-2 positions. Preference order for PC is C16:1 &gt; C16:0 &gt; C18:1 &gt; C18:0 &gt; C20:4 and for PI is C16:1 &gt; C16:0 &gt; C18:1 &gt; C18:0 &gt; C20:4 &gt; C20:3. The polypeptide is Phosphatidylinositol transfer protein alpha isoform (PITPNA) (Bos taurus (Bovine)).